We begin with the raw amino-acid sequence, 267 residues long: Matrilysin (267 aa).

The N-terminal stretch at 1 to 20 (MAAMRLTLFRIVCLLPGCLA) is a signal peptide. The propeptide at 21 to 97 (LPLSQEAGEV…PRCGVPDVAE (77 aa)) is activation peptide. The Cysteine switch motif lies at 88–95 (PRCGVPDV). Zn(2+) is bound at residue Cys90. Residue Asp156 coordinates Ca(2+). Zn(2+) is bound by residues His166 and Asp168. Positions 173, 174, 176, and 178 each coordinate Ca(2+). His181 lines the Zn(2+) pocket. Residues Gly188, Gly190, and Asp192 each coordinate Ca(2+). His194 is a binding site for Zn(2+). The Ca(2+) site is built by Asp196 and Glu199. His217 lines the Zn(2+) pocket. Glu218 is an active-site residue. Zn(2+) is bound by residues His221 and His227.

The protein belongs to the peptidase M10A family. It depends on Ca(2+) as a cofactor. Requires Zn(2+) as cofactor.

Its subcellular location is the secreted. The protein localises to the extracellular space. It localises to the extracellular matrix. The enzyme catalyses Cleavage of 14-Ala-|-Leu-15 and 16-Tyr-|-Leu-17 in B chain of insulin. No action on collagen types I, II, IV, V. Cleaves gelatin chain alpha2(I) &gt; alpha1(I).. Functionally, degrades casein, gelatins of types I, III, IV, and V, and fibronectin. Activates procollagenase. This chain is Matrilysin (Mmp7), found in Rattus norvegicus (Rat).